The sequence spans 233 residues: Pyridoxal 5'-phosphate synthase subunit PdxT (233 aa).

61–63 contributes to the L-glutamine binding site; that stretch reads GES. The active-site Nucleophile is C93. L-glutamine contacts are provided by residues R127 and 163 to 164; that span reads IR. Active-site charge relay system residues include H212 and E214.

This sequence belongs to the glutaminase PdxT/SNO family. As to quaternary structure, in the presence of PdxS, forms a dodecamer of heterodimers. Only shows activity in the heterodimer.

It carries out the reaction aldehydo-D-ribose 5-phosphate + D-glyceraldehyde 3-phosphate + L-glutamine = pyridoxal 5'-phosphate + L-glutamate + phosphate + 3 H2O + H(+). It catalyses the reaction L-glutamine + H2O = L-glutamate + NH4(+). It participates in cofactor biosynthesis; pyridoxal 5'-phosphate biosynthesis. Functionally, catalyzes the hydrolysis of glutamine to glutamate and ammonia as part of the biosynthesis of pyridoxal 5'-phosphate. The resulting ammonia molecule is channeled to the active site of PdxS. The protein is Pyridoxal 5'-phosphate synthase subunit PdxT of Paenarthrobacter aurescens (strain TC1).